Consider the following 199-residue polypeptide: Probable nicotinate-nucleotide adenylyltransferase (199 aa).

This sequence belongs to the NadD family.

The catalysed reaction is nicotinate beta-D-ribonucleotide + ATP + H(+) = deamido-NAD(+) + diphosphate. It functions in the pathway cofactor biosynthesis; NAD(+) biosynthesis; deamido-NAD(+) from nicotinate D-ribonucleotide: step 1/1. Catalyzes the reversible adenylation of nicotinate mononucleotide (NaMN) to nicotinic acid adenine dinucleotide (NaAD). The chain is Probable nicotinate-nucleotide adenylyltransferase from Roseiflexus castenholzii (strain DSM 13941 / HLO8).